Here is a 667-residue protein sequence, read N- to C-terminus: Protein MAIN-LIKE 2 (667 aa).

M1 is subject to N-acetylmethionine. The segment covering 492–508 has biased composition (basic residues); sequence MRGKERVRRKGMGKRRK. Disordered regions lie at residues 492 to 523 and 594 to 667; these read MRGK…EDES and KLQE…TVVA. A compositionally biased stretch (acidic residues) spans 512–523; sequence PMEDYGGSEDES. Basic and acidic residues-rich tracts occupy residues 608-618 and 656-667; these read YDVKKEDKESK and SLDRRGENTVVA.

Expressed in root tips, the shoot apical meristem (SAM), leaves, mature flowers and embryos.

The protein localises to the nucleus. In terms of biological role, maybe required to maintain cell division activity in meristematic cells. The sequence is that of Protein MAIN-LIKE 2 from Arabidopsis thaliana (Mouse-ear cress).